A 474-amino-acid chain; its full sequence is PRAME family member 2 (474 aa).

Residues 97-124 (RWKLQVLDLRDVDENFWARWPGAWALSC) form an LRR 1; degenerate repeat. One copy of the LRR 2; degenerate repeat lies at 179 to 203 (HLCCSKLVNYLTPIKYLRKSLKIIY). An LRR 3; degenerate repeat occupies 204–230 (INSIGELEIHNTCWPHLIRKLYCYLKE). The LRR 4; degenerate repeat unit spans residues 231–265 (MKTLCKLVFSRCHHYTSDNELEGWLVTRFTSVFLR). LRR repeat units lie at residues 266 to 291 (LEHL…IRCL), 292 to 323 (QNPL…GYLK), 324 to 342 (HLNL…PLGA), 348 to 375 (AASL…GLSC), and 376 to 400 (CSQL…LLRH).

It belongs to the PRAME family.

The polypeptide is PRAME family member 2 (Homo sapiens (Human)).